Reading from the N-terminus, the 280-residue chain is Energy-coupling factor transporter ATP-binding protein EcfA2 (280 aa).

Positions 3 to 245 (INLQNVSYTY…VSLLEKKQLG (243 aa)) constitute an ABC transporter domain. ATP is bound at residue 40-47 (GHTGSGKS).

It belongs to the ABC transporter superfamily. Energy-coupling factor EcfA family. As to quaternary structure, forms a stable energy-coupling factor (ECF) transporter complex composed of 2 membrane-embedded substrate-binding proteins (S component), 2 ATP-binding proteins (A component) and 2 transmembrane proteins (T component).

Its subcellular location is the cell membrane. Its function is as follows. ATP-binding (A) component of a common energy-coupling factor (ECF) ABC-transporter complex. Unlike classic ABC transporters this ECF transporter provides the energy necessary to transport a number of different substrates. This chain is Energy-coupling factor transporter ATP-binding protein EcfA2, found in Streptococcus pyogenes serotype M28 (strain MGAS6180).